A 1294-amino-acid polypeptide reads, in one-letter code: Voltage-gated inwardly rectifying potassium channel KCNH2 (1294 aa).

At 1–377 the chain is on the cytoplasmic side; that stretch reads RKFIIANARV…RIHRWTILHY (377 aa). The PAS domain occupies 15-44; it reads VIYCNDGFCELCGYSRAEVMQRPCTCDFLH. One can recognise a PAC domain in the interval 66–118; that stretch reads RKVEIAFYRKDGSCFLCLVDVVPVKNEDGAVIMFILNFEVVMEKDMVGSPARD. The segment at 207-258 is disordered; that stretch reads LVAPGSPPSSVPGPPHTSPRAHSLNPDASGSSCSLARTRSRESCASVRRASS. Over residues 211 to 223 the composition is skewed to pro residues; the sequence is GSPPSSVPGPPHT. 2 positions are modified to phosphoserine: S212 and S216. Positions 232-243 are enriched in polar residues; sequence PDASGSSCSLAR. A phosphoserine mark is found at S257, S258, S294, and S325. A helical transmembrane segment spans residues 378–398; that stretch reads SPFKAVWDWLILLLVIYTAVF. Over 399–424 the chain is Extracellular; it reads TPYSAAFLLKEPEEDAQTADCGYACQ. Residues 425–445 form a helical membrane-spanning segment; it reads PLAVVDLIVDIMFIVDILINF. At 446-469 the chain is on the cytoplasmic side; sequence RTTYVNANEEVVSHPGRIAVHYFK. The chain crosses the membrane as a helical span at residues 470–490; the sequence is GWFLIDMVAAIPFDLLIFGSG. The Extracellular segment spans residues 491–494; sequence SEEL. A helical; Voltage-sensor membrane pass occupies residues 495–515; the sequence is IGLLKTARLLRLVRVARKLDR. At 516–521 the chain is on the cytoplasmic side; the sequence is YSEYGA. Residues 522-542 form a helical membrane-spanning segment; the sequence is AVLFLLMCTFALIAHWLACIW. Over 543 to 585 the chain is Extracellular; sequence YAIGNMEQPDMNSRIGWLHNLGDQIGKPYNSSGLGGPSIKDKY. The pore-forming intramembrane region spans 586-606; the sequence is VTALYFTFSSLTSVGFGNVSP. A Selectivity filter motif is present at residues 598–603; that stretch reads SVGFGN. Topologically, residues 607-612 are extracellular; the sequence is NTNSEK. Residues 613 to 633 traverse the membrane as a helical segment; the sequence is IFSICVMLIGSLMYASIFGNV. Residues 634-1294 are Cytoplasmic-facing; the sequence is SAIIQRLYSG…IAHWLACIWY (661 aa). A cNMP-binding domain region spans residues 716–816; sequence PFRGATKGCL…IHRDDLLEVL (101 aa). The interval 844 to 956 is disordered; that stretch reads GSPGSTELEG…LTEDGDKSDT (113 aa). A phosphoserine mark is found at S845 and S848. Basic residues predominate over residues 857 to 866; the sequence is RQRRRKLSFR. Over residues 902–913 the composition is skewed to low complexity; that stretch reads GDSPSSGPSSPE. An Omega-N-methylarginine modification is found at R987. The stretch at 1008-1035 forms a coiled coil; that stretch reads RGDVESRLDALQRQLNRLETRLSADMAT. The residue at position 1110 (S1110) is a Phosphoserine.

It belongs to the potassium channel family. H (Eag) (TC 1.A.1.20) subfamily. Kv11.1/KCNH2 sub-subfamily. The potassium channel is probably composed of a homo- or heterotetrameric complex of pore-forming alpha subunits that can associate with modulating beta subunits. Interacts with DNAJB12 and DNAJB14; chaperones DNAJB12 and DNAJB14 promote tetramerization. Heteromultimer with KCNH6/ERG2 and KCNH7/ERG3. Interacts with ALG10B. Forms a stable complex with KCNE1 or KCNE2, and that this heteromultimerization regulates Inward rectifier potassium channel activity. Interacts with CANX. The core-glycosylated, but not the fully glycosylated form interacts with RNF207. Interacts with NDFIP1 and NDFIP2; this interaction decreases the cell membrane expression by targeting KCNH2, through interaction with NEDD4L, for the degradation through the multivesicular bodies (MVBs)-lysosomal pathway. Post-translationally, phosphorylated on serine and threonine residues. Phosphorylation by PKA inhibits ion conduction. As to expression, highly expressed in heart and brain.

Its subcellular location is the cell membrane. The enzyme catalyses K(+)(in) = K(+)(out). Its function is as follows. Pore-forming (alpha) subunit of voltage-gated inwardly rectifying potassium channel. Characterized by unusual gating kinetics by producing relatively small outward currents during membrane depolarization and large inward currents during subsequent repolarization which reflect a rapid inactivation during depolarization and quick recovery from inactivation but slow deactivation (closing) during repolarization. Channel properties are modulated by cAMP and subunit assembly. Forms a stable complex with KCNE1 or KCNE2, and that this heteromultimerization regulates inward rectifier potassium channel activity. The polypeptide is Voltage-gated inwardly rectifying potassium channel KCNH2 (Cavia porcellus (Guinea pig)).